Here is a 111-residue protein sequence, read N- to C-terminus: VLLKMKEIADAYLGKKVTDVVITVPAYFNDSQRQATKDAGVIAGLNVLRIINEPNAAAIAYGLDKKVEKEKNVLIFDLGGGTFDVSILAIEDGIFEVKSTAGDTHLGGEDF.

This sequence belongs to the heat shock protein 70 family.

The protein is Heat shock 70 kDa protein (HSP70) of Hydra oligactis (Brown hydra).